Here is a 545-residue protein sequence, read N- to C-terminus: Carboxypeptidase N subunit 2 (545 aa).

The first 21 residues, 1–21 (MLPGAWLLWTSLLLLARPAQP), serve as a signal peptide directing secretion. Residues 22-49 (CPMGCDCFVQEVFCSDEELATVPLDIPP) form the LRRNT domain. N74, N111, and N119 each carry an N-linked (GlcNAc...) asparagine glycan. LRR repeat units follow at residues 98–119 (RLED…IFSN), 122–143 (SLGK…LFQH), 146–167 (ALES…LFQP), 170–191 (HLKT…LFHP), 194–215 (SLQT…VFGK), 218–239 (SLQE…VFSQ), 242–263 (CLER…IFAS), 266–287 (NLTF…LFAH), 290–311 (CLVG…TFAH), 314–335 (NLRS…IFRD), 338–359 (ELVK…LFQN), and 362–383 (KLEL…IFDT). An N-linked (GlcNAc...) asparagine glycan is attached at N228. N266 carries an N-linked (GlcNAc...) asparagine glycan. N348 and N359 each carry an N-linked (GlcNAc...) asparagine glycan. The LRRCT domain maps to 395–447 (NPWQCDCHLAYLFNWLQQYTDRLLNIQTYCAGPAYLKGQVVPALNEKQLVCPV). N-linked (GlcNAc...) asparagine glycosylation occurs at N518.

As to quaternary structure, tetramer of two catalytic chains and two glycosylated inactive chains. Whether or not any Cys residues participate in intrachain bonds is unknown, but they do not form interchain disulfide bonds with the 50 kDa catalytic subunit.

The protein resides in the secreted. Functionally, the 83 kDa subunit binds and stabilizes the catalytic subunit at 37 degrees Celsius and keeps it in circulation. Under some circumstances it may be an allosteric modifier of the catalytic subunit. The sequence is that of Carboxypeptidase N subunit 2 (CPN2) from Homo sapiens (Human).